The chain runs to 856 residues: Nuclear valosin-containing protein-like (856 aa).

An interaction with RPL5 region spans residues M1–K220. Residues R49–R52 carry the Nucleolar localization signal motif. The residue at position 70 (K70) is an N6-acetyllysine. The segment at A84–I175 is disordered. The Nuclear localization signal motif lies at K85–R88. The segment covering E92 to P111 has biased composition (acidic residues). Polar residues-rich tracts occupy residues Q114–L124 and D133–G158. Position 134 is a phosphoserine (S134). T138 is modified (phosphothreonine). N6-acetyllysine is present on K156. S191 carries the post-translational modification Phosphoserine. The interval P197–Q236 is disordered. Over residues Q205–K218 the composition is skewed to basic and acidic residues. K208 participates in a covalent cross-link: Glycyl lysine isopeptide (Lys-Gly) (interchain with G-Cter in SUMO2). Residues S211 and S215 each carry the phosphoserine modification. Positions K218–K232 match the Nuclear localization signal motif. Residues R219 to R230 are compositionally biased toward basic residues. The interval V267–L474 is interaction with WDR74. G305 to T312 is a binding site for ATP. The segment at Q496–E523 is disordered. G622–T629 contributes to the ATP binding site.

This sequence belongs to the AAA ATPase family. In terms of assembly, interacts with NCL/nucleolin. Isoform 1 and isoform 2 interact with TERT and isoform 1 exhibits a higher binding affinity for TERT compared to isoform 2. Isoform 1 interacts with MTREX in an ATP-dependent manner; the interaction is required to associate NVL with nuclear RNA exosome. Isoform 1 interacts with RPL5 in an ATP-dependent manner. Interacts with WDR74 (through WDR repeats); the interaction is independent of RNA or pre-60S ribosome particles. In terms of tissue distribution, widely expressed. Highest level of expression in heart, placenta, skeletal muscle, pancreas and retina.

The protein localises to the nucleus. It localises to the nucleoplasm. Its subcellular location is the nucleolus. Its function is as follows. Participates in the assembly of the telomerase holoenzyme and effecting of telomerase activity via its interaction with TERT. Involved in both early and late stages of the pre-rRNA processing pathways. Spatiotemporally regulates 60S ribosomal subunit biogenesis in the nucleolus. Catalyzes the release of specific assembly factors, such as WDR74, from pre-60S ribosomal particles through the ATPase activity. The chain is Nuclear valosin-containing protein-like from Homo sapiens (Human).